The chain runs to 467 residues: Putative serine/threonine-protein kinase R400 (467 aa).

Positions 99-467 constitute a Protein kinase domain; that stretch reads GVKLIYIKSG…STGQKPTKKV (369 aa). ATP-binding positions include 105 to 113 and lysine 129; that span reads IKSGTTGHT. Aspartate 272 functions as the Proton acceptor in the catalytic mechanism. Residues 443–467 are disordered; that stretch reads LFQQGNGSKQPVPKKSTGQKPTKKV. Positions 458 to 467 are enriched in polar residues; sequence STGQKPTKKV.

This sequence belongs to the protein kinase superfamily. Ser/Thr protein kinase family.

The protein resides in the virion. The catalysed reaction is L-seryl-[protein] + ATP = O-phospho-L-seryl-[protein] + ADP + H(+). It carries out the reaction L-threonyl-[protein] + ATP = O-phospho-L-threonyl-[protein] + ADP + H(+). The protein is Putative serine/threonine-protein kinase R400 of Acanthamoeba polyphaga mimivirus (APMV).